The chain runs to 358 residues: Methylthioribose-1-phosphate isomerase (358 aa).

Residues 54-56 (RGA), R96, and Q205 each bind substrate. D246 functions as the Proton donor in the catalytic mechanism. 256–257 (NK) contacts substrate.

It belongs to the eIF-2B alpha/beta/delta subunits family. MtnA subfamily.

It catalyses the reaction 5-(methylsulfanyl)-alpha-D-ribose 1-phosphate = 5-(methylsulfanyl)-D-ribulose 1-phosphate. Its pathway is amino-acid biosynthesis; L-methionine biosynthesis via salvage pathway; L-methionine from S-methyl-5-thio-alpha-D-ribose 1-phosphate: step 1/6. In terms of biological role, catalyzes the interconversion of methylthioribose-1-phosphate (MTR-1-P) into methylthioribulose-1-phosphate (MTRu-1-P). The protein is Methylthioribose-1-phosphate isomerase of Ectopseudomonas mendocina (strain ymp) (Pseudomonas mendocina).